The following is a 660-amino-acid chain: CXXC-type zinc finger protein 1 (660 aa).

N-acetylmethionine is present on Met1. The segment covering 1–14 has biased composition (acidic residues); it reads MEGDGSDLEPPDAG. Residues 1–20 form a disordered region; the sequence is MEGDGSDLEPPDAGDDSKSE. 2 positions are modified to phosphoserine: Ser6 and Ser19. Residues 28–76 form a PHD-type zinc finger; that stretch reads YCICRKPDINCFMIGCDNCNEWFHGDCIRITEKMAKAIREWYCRECREK. Basic and acidic residues predominate over residues 91–120; it reads ERDGSERAGSEPRDEGGGRKRPASDPELQR. Residues 91–166 are disordered; the sequence is ERDGSERAGS…QQQQQQQQQI (76 aa). Residue Ser124 is modified to Phosphoserine. Residues 164 to 213 form a CXXC-type zinc finger; the sequence is QQIKRSARMCGECEACRRTEDCGHCDFCRDMKKFGGPNKIRQKCRLRQCQ. Cys173, Cys176, Cys179, Cys185, Cys188, Cys191, Cys207, and Cys212 together coordinate Zn(2+). 2 disordered regions span residues 223-287 and 328-375; these read FPSS…SDED and AVKV…DPAS. Ser228 bears the Phosphoserine mark. At Thr231 the chain carries Phosphothreonine. A Glycyl lysine isopeptide (Lys-Gly) (interchain with G-Cter in SUMO2) cross-link involves residue Lys254. Basic residues predominate over residues 328-338; the sequence is AVKVKHVKRRE. Over residues 339–349 the composition is skewed to basic and acidic residues; it reads KKSEKKKEERY. A compositionally biased stretch (basic residues) spans 350–362; sequence KRHRQKQKHKDKW. Basic and acidic residues predominate over residues 363–372; it reads KHPERADAKD. Residues 426–479 adopt a coiled-coil conformation; that stretch reads AEEHGKKLLERIRREQQSARTRLQEMERRFHELEAIILRAKQQAVREDEENNEN.

In terms of assembly, component of the SET1 complex, at least composed of the catalytic subunit (SETD1A or SETD1B), WDR5, WDR82, RBBP5, ASH2L/ASH2, CXXC1/CFP1, HCFC1 and DPY30. Interacts with SETD1A. Interacts with ZNF335. Interacts with PRDM9; this interaction does not link PRDM9-activated recombination hotspot sites with DSB machinery and is not required for the hotspot recognition pathway. Interacts with histone H3K4me3. In terms of tissue distribution, expressed in seminiferous tubules and in both germ cells and Sertoli cells. Highly expressed in spermatogonia, weakly expressed in leptonema and zygonema, and then again high expression in pachynema and diplonema, decreasing to undetectable levels in spermatids.

The protein localises to the nucleus speckle. The protein resides in the nucleus. Functionally, transcriptional activator that exhibits a unique DNA binding specificity for CpG unmethylated motifs with a preference for CpGG. The sequence is that of CXXC-type zinc finger protein 1 (Cxxc1) from Mus musculus (Mouse).